Reading from the N-terminus, the 423-residue chain is Cyclin-dependent kinase 14 (423 aa).

The segment at 62-85 (VGKESPKVRRHSSPSSPTSPKFGK) is disordered. The 285-residue stretch at 89–373 (YEKLEKLGEG…AQAALNHDYF (285 aa)) folds into the Protein kinase domain. Residues 95–103 (LGEGSYATV) and Lys-118 each bind ATP. Residue Asp-210 is the Proton acceptor of the active site.

This sequence belongs to the protein kinase superfamily. CMGC Ser/Thr protein kinase family. CDC2/CDKX subfamily. In terms of assembly, interacts with ccny; ccny mediates its recruitment to the plasma membrane and promotes phosphorylation of lrp6.

It is found in the cell membrane. The enzyme catalyses L-seryl-[protein] + ATP = O-phospho-L-seryl-[protein] + ADP + H(+). The catalysed reaction is L-threonyl-[protein] + ATP = O-phospho-L-threonyl-[protein] + ADP + H(+). In terms of biological role, serine/threonine-protein kinase involved in the control of the eukaryotic cell cycle, whose activity is controlled by an associated cyclin. Acts as a cell-cycle regulator of Wnt signaling pathway during G2/M phase by mediating the phosphorylation of lrp6, leading to the activation of the Wnt signaling pathway. This Xenopus tropicalis (Western clawed frog) protein is Cyclin-dependent kinase 14 (cdk14).